The primary structure comprises 309 residues: Electron transfer flavoprotein subunit alpha (309 aa).

253–281 contacts FAD; the sequence is LYIAVGISGAIQHLAGMKDSKVIVAINKD.

The protein belongs to the ETF alpha-subunit/FixB family. Heterodimer of an alpha and a beta subunit. The cofactor is FAD.

Its function is as follows. The electron transfer flavoprotein serves as a specific electron acceptor for other dehydrogenases. It transfers the electrons to the main respiratory chain via ETF-ubiquinone oxidoreductase (ETF dehydrogenase). The polypeptide is Electron transfer flavoprotein subunit alpha (etfA) (Pseudomonas aeruginosa (strain ATCC 15692 / DSM 22644 / CIP 104116 / JCM 14847 / LMG 12228 / 1C / PRS 101 / PAO1)).